The primary structure comprises 417 residues: Gamma-glutamyl phosphate reductase (417 aa).

It belongs to the gamma-glutamyl phosphate reductase family.

Its subcellular location is the cytoplasm. It carries out the reaction L-glutamate 5-semialdehyde + phosphate + NADP(+) = L-glutamyl 5-phosphate + NADPH + H(+). It functions in the pathway amino-acid biosynthesis; L-proline biosynthesis; L-glutamate 5-semialdehyde from L-glutamate: step 2/2. Catalyzes the NADPH-dependent reduction of L-glutamate 5-phosphate into L-glutamate 5-semialdehyde and phosphate. The product spontaneously undergoes cyclization to form 1-pyrroline-5-carboxylate. The chain is Gamma-glutamyl phosphate reductase from Shigella flexneri serotype 5b (strain 8401).